We begin with the raw amino-acid sequence, 553 residues long: CTP synthase (553 aa).

Residues 1–277 are amidoligase domain; it reads MPTEPETDYD…DQYVMEELDI (277 aa). A CTP-binding site is contributed by Ser26. Ser26 contacts UTP. Residues 27–32 and Asp84 contribute to the ATP site; that span reads GLGKGI. Positions 84 and 152 each coordinate Mg(2+). Residues 159-161, 198-203, and Lys234 each bind CTP; these read DIE and KTKPTQ. UTP-binding positions include 198 to 203 and Lys234; that span reads KTKPTQ. The region spanning 307–544 is the Glutamine amidotransferase type-1 domain; it reads LVGKYDLEDA…LEAVLGDDPH (238 aa). Gly364 provides a ligand contact to L-glutamine. Cys391 serves as the catalytic Nucleophile; for glutamine hydrolysis. L-glutamine-binding positions include 392–395, Glu415, and Arg472; that span reads LGFQ. Catalysis depends on residues His517 and Glu519.

It belongs to the CTP synthase family. As to quaternary structure, homotetramer.

The enzyme catalyses UTP + L-glutamine + ATP + H2O = CTP + L-glutamate + ADP + phosphate + 2 H(+). It catalyses the reaction L-glutamine + H2O = L-glutamate + NH4(+). It carries out the reaction UTP + NH4(+) + ATP = CTP + ADP + phosphate + 2 H(+). It participates in pyrimidine metabolism; CTP biosynthesis via de novo pathway; CTP from UDP: step 2/2. Its activity is regulated as follows. Allosterically activated by GTP, when glutamine is the substrate; GTP has no effect on the reaction when ammonia is the substrate. The allosteric effector GTP functions by stabilizing the protein conformation that binds the tetrahedral intermediate(s) formed during glutamine hydrolysis. Inhibited by the product CTP, via allosteric rather than competitive inhibition. Catalyzes the ATP-dependent amination of UTP to CTP with either L-glutamine or ammonia as the source of nitrogen. Regulates intracellular CTP levels through interactions with the four ribonucleotide triphosphates. The sequence is that of CTP synthase from Haloarcula marismortui (strain ATCC 43049 / DSM 3752 / JCM 8966 / VKM B-1809) (Halobacterium marismortui).